An 88-amino-acid polypeptide reads, in one-letter code: Large ribosomal subunit protein bL31B (88 aa).

This sequence belongs to the bacterial ribosomal protein bL31 family. Type B subfamily. As to quaternary structure, part of the 50S ribosomal subunit.

The protein is Large ribosomal subunit protein bL31B of Leuconostoc mesenteroides subsp. mesenteroides (strain ATCC 8293 / DSM 20343 / BCRC 11652 / CCM 1803 / JCM 6124 / NCDO 523 / NBRC 100496 / NCIMB 8023 / NCTC 12954 / NRRL B-1118 / 37Y).